The primary structure comprises 149 residues: MRCPYCSYEESKVVDSRSAEDYNAIRRRRECLRCSKRYTTYEKVEDIPILVIKKDLSRESFNKEKIISGLIKACQKRPVSRAQIEEIASDIERNISNKMMVEIKSDYIGEMIMERLKDIDEVSYVRFASVYRQFKDINTFMEEIKNLMK.

A zinc finger spans residues 3–34 (CPYCSYEESKVVDSRSAEDYNAIRRRRECLRC). Positions 49–139 (ILVIKKDLSR…VYRQFKDINT (91 aa)) constitute an ATP-cone domain.

It belongs to the NrdR family. Zn(2+) is required as a cofactor.

Functionally, negatively regulates transcription of bacterial ribonucleotide reductase nrd genes and operons by binding to NrdR-boxes. The protein is Transcriptional repressor NrdR of Clostridium perfringens (strain SM101 / Type A).